The chain runs to 206 residues: Accelerated cell death 11 (206 aa).

An N-acylsphingoid base 1-phosphate-binding residues include Asp-60, Lys-64, Arg-99, Arg-103, and His-143.

Belongs to the GLTP family. As to quaternary structure, interacts with BPA1, PRA1F2 and PRA1F3.

The protein localises to the cytoplasm. Functionally, exhibits selective intermembrane transfer of ceramide-1-phosphate (C1P) and phytoceramide-1-phosphate. Does not transport ceramide (Cer) or GalCer, suggesting a requirement for phosphate in the headgroup for functionality. Transports in vitro sphingosine, but not glycosphingolipids. Also has some in vitro activity with sphingomyelin, a lipid not detected in plant tissues. The transport function may be not directly involved in regulating cell death. Rather, perturbations in the function of ACD11 or related components could be monitored by R-proteins, which then mediate defense and programmed cell death (PCD), as proposed in the guard hypothesis. C1P transfer is stimulated by phosphatidylserine in C1P source vesicles. Regulates autophagy, inflammasome mediated IL1B and IL18 processing, and pyroptosis, but not apoptosis. The sequence is that of Accelerated cell death 11 from Arabidopsis thaliana (Mouse-ear cress).